A 542-amino-acid polypeptide reads, in one-letter code: MAKQILFREEARKALEQGINQLADAVKVTIGPKGRNVLLEKKFGAPQIVNDGVTIAKEIELADPLENTGAQLMREVATKTNDVAGDGTTTATILAQSMVQEGLKNISAGANPVALRRGIEKTTAYLVEQIAAQAKPVEGRKNIAEVATISAGNDPEVGEMIARAMDAVGRDGVITVEESKSLETQLEVVEGMQFDRGYISPYFVTDTERMVAEYENAYLLITSNKLSNLQDLVPVLERVAREGRPLLVIAEDVEGEALATLVVNKLRGVLNAVAVKAPAFGDRRKAMLEDIAILTGGQLISEDIGIKLENVTLDMMGVARKITVTKDKTTIVTDGSTKAAVEKRVAQIRKQLETTDSEYDREKLQERIAKLAGGVAVIKVGAATETELKDRKLRIEDALNATRAAVEEGIVPGGGATLLHLSKGIPAFKANLNAEEQVGADIVCRALQAPLYQIAHNAGLEGSVVVEKVLEKEMPFGFDALTGTYVDMFAQGIVDPAKVVRSALQNAASIAAMYLTTEAIVVEKPEPKTKTGASRSGGAGMM.

ATP-binding positions include 29 to 32 (TIGP), 86 to 90 (DGTTT), Gly-414, 479 to 481 (DAL), and Asp-495.

This sequence belongs to the chaperonin (HSP60) family. In terms of assembly, forms a cylinder of 14 subunits composed of two heptameric rings stacked back-to-back. Interacts with the co-chaperonin GroES.

The protein localises to the cytoplasm. The catalysed reaction is ATP + H2O + a folded polypeptide = ADP + phosphate + an unfolded polypeptide.. Together with its co-chaperonin GroES, plays an essential role in assisting protein folding. The GroEL-GroES system forms a nano-cage that allows encapsulation of the non-native substrate proteins and provides a physical environment optimized to promote and accelerate protein folding. This chain is Chaperonin GroEL 1, found in Synechococcus sp. (strain JA-3-3Ab) (Cyanobacteria bacterium Yellowstone A-Prime).